A 139-amino-acid polypeptide reads, in one-letter code: Drosulfakinins (139 aa).

Residues 1–35 (MGHRGMGCAHFATMAMPLWALTFYLLVVLPVPSQT) form the signal peptide. Positions 36-71 (ASVEVGKEERRLQDLDPKMGSEAGNTDGLSLARFGS) are excised as a propeptide. Position 80 is a phenylalanine amide (Phe80). The propeptide occupies 81-109 (GHRVPIISRPVIPIELDLLMDNEDDRTMS). Tyr115 bears the Sulfotyrosine mark. Phe120 bears the Phenylalanine amide mark. Tyr132 carries the sulfotyrosine modification. Phenylalanine amide is present on Phe137.

This sequence belongs to the gastrin/cholecystokinin family.

Its subcellular location is the secreted. In terms of biological role, drosulfakinin-0 (DSK 0) plays diverse biological roles including regulating gut muscle contraction in adults but not in larvae. The protein is Drosulfakinins of Drosophila pseudoobscura pseudoobscura (Fruit fly).